Consider the following 351-residue polypeptide: Nicotinate-nucleotide--dimethylbenzimidazole phosphoribosyltransferase (351 aa).

The active-site Proton acceptor is the E318.

This sequence belongs to the CobT family.

The catalysed reaction is 5,6-dimethylbenzimidazole + nicotinate beta-D-ribonucleotide = alpha-ribazole 5'-phosphate + nicotinate + H(+). It functions in the pathway nucleoside biosynthesis; alpha-ribazole biosynthesis; alpha-ribazole from 5,6-dimethylbenzimidazole: step 1/2. In terms of biological role, catalyzes the synthesis of alpha-ribazole-5'-phosphate from nicotinate mononucleotide (NAMN) and 5,6-dimethylbenzimidazole (DMB). The sequence is that of Nicotinate-nucleotide--dimethylbenzimidazole phosphoribosyltransferase from Chloroflexus aurantiacus (strain ATCC 29366 / DSM 635 / J-10-fl).